We begin with the raw amino-acid sequence, 436 residues long: Deoxyuridine 5'-triphosphate nucleotidohydrolase (436 aa).

Substrate contacts are provided by residues 328 to 330 (RSS) and 431 to 432 (FG).

This sequence belongs to the dUTPase family. The cofactor is Mg(2+).

It carries out the reaction dUTP + H2O = dUMP + diphosphate + H(+). Involved in nucleotide metabolism: produces dUMP, the immediate precursor of thymidine nucleotides and decreases the intracellular concentration of dUTP to avoid uracil incorporation into viral DNA. The chain is Deoxyuridine 5'-triphosphate nucleotidohydrolase from Gallid herpesvirus 2 (strain Chicken/Md5/ATCC VR-987) (GaHV-2).